The following is a 387-amino-acid chain: Homoserine O-succinyltransferase (387 aa).

An AB hydrolase-1 domain is found at 45–354; that stretch reads NAVLVCHALN…DAPHGHDAFL (310 aa). Serine 151 serves as the catalytic Nucleophile. A substrate-binding site is contributed by arginine 221. Residues aspartate 317 and histidine 350 contribute to the active site. Aspartate 351 provides a ligand contact to substrate.

It belongs to the AB hydrolase superfamily. MetX family. Homodimer.

Its subcellular location is the cytoplasm. The enzyme catalyses L-homoserine + succinyl-CoA = O-succinyl-L-homoserine + CoA. It participates in amino-acid biosynthesis; L-methionine biosynthesis via de novo pathway; O-succinyl-L-homoserine from L-homoserine: step 1/1. Functionally, transfers a succinyl group from succinyl-CoA to L-homoserine, forming succinyl-L-homoserine. In Methylibium petroleiphilum (strain ATCC BAA-1232 / LMG 22953 / PM1), this protein is Homoserine O-succinyltransferase.